The following is a 117-amino-acid chain: UPF0102 protein RSKD131_0118 (117 aa).

The protein belongs to the UPF0102 family.

In Cereibacter sphaeroides (strain KD131 / KCTC 12085) (Rhodobacter sphaeroides), this protein is UPF0102 protein RSKD131_0118.